The sequence spans 293 residues: Ribosomal protein L11 methyltransferase (293 aa).

Residues T145, G166, D188, and N229 each coordinate S-adenosyl-L-methionine.

This sequence belongs to the methyltransferase superfamily. PrmA family.

The protein localises to the cytoplasm. The enzyme catalyses L-lysyl-[protein] + 3 S-adenosyl-L-methionine = N(6),N(6),N(6)-trimethyl-L-lysyl-[protein] + 3 S-adenosyl-L-homocysteine + 3 H(+). Methylates ribosomal protein L11. This chain is Ribosomal protein L11 methyltransferase, found in Idiomarina loihiensis (strain ATCC BAA-735 / DSM 15497 / L2-TR).